Here is a 353-residue protein sequence, read N- to C-terminus: 4-hydroxy-3-methylbut-2-en-1-yl diphosphate synthase (flavodoxin) (353 aa).

[4Fe-4S] cluster contacts are provided by Cys-268, Cys-271, Cys-303, and Glu-310.

The protein belongs to the IspG family. Requires [4Fe-4S] cluster as cofactor.

The enzyme catalyses (2E)-4-hydroxy-3-methylbut-2-enyl diphosphate + oxidized [flavodoxin] + H2O + 2 H(+) = 2-C-methyl-D-erythritol 2,4-cyclic diphosphate + reduced [flavodoxin]. It functions in the pathway isoprenoid biosynthesis; isopentenyl diphosphate biosynthesis via DXP pathway; isopentenyl diphosphate from 1-deoxy-D-xylulose 5-phosphate: step 5/6. Its function is as follows. Converts 2C-methyl-D-erythritol 2,4-cyclodiphosphate (ME-2,4cPP) into 1-hydroxy-2-methyl-2-(E)-butenyl 4-diphosphate. This is 4-hydroxy-3-methylbut-2-en-1-yl diphosphate synthase (flavodoxin) from Ruminiclostridium cellulolyticum (strain ATCC 35319 / DSM 5812 / JCM 6584 / H10) (Clostridium cellulolyticum).